The following is a 623-amino-acid chain: Protein vein (623 aa).

A signal peptide spans 1–40 (MYAQHLRKWSLKTKKQLMPLILLIISYMLLLNTCVLSSSA). Disordered stretches follow at residues 70–98 (IPLSSDNGSGSSESSAESGSSSSRSSSNN), 130–162 (DAGSSTPAQQEQHVAAVPEQQQQQQQQQQSMQK), 184–214 (AASSKMRRHIQPSQLPHQPESRAQLPSNYSS), and 229–317 (PESM…QRYN). 2 stretches are compositionally biased toward low complexity: residues 72–98 (LSSDNGSGSSESSAESGSSSSRSSSNN) and 136–158 (PAQQEQHVAAVPEQQQQQQQQQQ). N76 carries N-linked (GlcNAc...) asparagine glycosylation. N-linked (GlcNAc...) asparagine glycosylation is present at N211. A compositionally biased stretch (basic and acidic residues) spans 233-248 (LEDRSPEQAARSRRDG). The N-linked (GlcNAc...) asparagine glycan is linked to N252. Low complexity predominate over residues 255–267 (RQQQRTGHRQQLQ). Residues 305–316 (QRRKHQRKHQRY) are compositionally biased toward basic residues. N-linked (GlcNAc...) asparagine glycans are attached at residues N350, N381, N424, N449, N521, and N574. The Ig-like C2-type domain maps to 457-542 (TKIFSKPSKA…AKNKASKAIA (86 aa)). 4 disulfides stabilise this stretch: C478–C531, C566–C577, C571–C588, and C590–C599. Residues 561-599 (ASGIPCNFDYCFHNGTCRMIPDINEVYCRCPTEYFGNRC) enclose the EGF-like domain.

The protein resides in the secreted. Ligand for the EGF receptor. Seems to play a role in the global proliferation of wing disc cells and the larval patterning. Shows a strong synergistic genetic interaction with spi, suggesting a molecular interdependence. Required for the development of interveins cells. The polypeptide is Protein vein (vn) (Drosophila melanogaster (Fruit fly)).